The sequence spans 426 residues: Crinkler effector protein 4 (426 aa).

An LQLFLAK domain region spans residues 20–57 (VEIDDSAKVSKLKKVIKEENPATITCDAKDLQLFLAKK). Positions 59-107 (DAWLDGAGAAAVELDEHGHPQGCVQMDPTLWVKNPKHFGDNFQPGEGQV) are DWL domain. Positions 108–114 (HVLVVVP) match the HVLVXXP motif motif. The interval 115 to 426 (EGVVGSASET…RSIPTLSYFS (312 aa)) is effector domain.

It belongs to the Crinkler effector family.

Its subcellular location is the secreted. It is found in the host nucleus. Its function is as follows. Secreted effector that is critical to pathogenesis by suppressing plant immune responsess. Promotes Phytophthora infection by suppressing the H(2)O(2) accumulation and callose deposition. May induce cell death by regulating expression of cell death-related genes. This chain is Crinkler effector protein 4, found in Phytophthora capsici.